The primary structure comprises 122 residues: MARIAGVNIPTNKRVVIALQYIHGIGQKNAAEIIDKVKIPADRRVSQLSDQEVLQIREVIDRDYLVEGDLRREVGINIKRLMDLGCYRGLRHRRGLPVRGQRTHTNARTRKGPAKSIAGKKK.

Residues 95–122 (GLPVRGQRTHTNARTRKGPAKSIAGKKK) form a disordered region.

The protein belongs to the universal ribosomal protein uS13 family. In terms of assembly, part of the 30S ribosomal subunit. Forms a loose heterodimer with protein S19. Forms two bridges to the 50S subunit in the 70S ribosome.

Located at the top of the head of the 30S subunit, it contacts several helices of the 16S rRNA. In the 70S ribosome it contacts the 23S rRNA (bridge B1a) and protein L5 of the 50S subunit (bridge B1b), connecting the 2 subunits; these bridges are implicated in subunit movement. Contacts the tRNAs in the A and P-sites. The polypeptide is Small ribosomal subunit protein uS13 (Nitrobacter hamburgensis (strain DSM 10229 / NCIMB 13809 / X14)).